Here is a 908-residue protein sequence, read N- to C-terminus: Glutamate receptor ionotropic, kainate 2 (908 aa).

The N-terminal stretch at 1–31 (MKIISPVLSNLVFSRSIKVLLCLLWIGYSQG) is a signal peptide. Residues 32-561 (TTHVLRFGGI…VFSFLNPLSP (530 aa)) are Extracellular-facing. 7 N-linked (GlcNAc...) asparagine glycosylation sites follow: N67, N73, N275, N378, N412, N423, and N430. A disulfide bridge connects residues C96 and C347. Positions 516, 518, and 523 each coordinate L-glutamate. Residue N546 is glycosylated (N-linked (GlcNAc...) asparagine). Residues 562-582 (DIWMYILLAYLGVSCVLFVIA) traverse the membrane as a helical segment. Residues 583–638 (RFSPYEWYNPHPCNPDSDVVENNFTLLNSFWFGVGALMQQGSELMPKALSTRIVGG) are Cytoplasmic-facing. Residues 639-659 (IWWFFTLIIISSYTANLAAFL) form a helical membrane-spanning segment. At 660–819 (TVERMESPID…KEASALGVQN (160 aa)) the chain is on the extracellular side. L-glutamate is bound by residues A689, T690, and E738. Residues C750 and C804 are joined by a disulfide bond. N-linked (GlcNAc...) asparagine glycosylation occurs at N751. Residues 820 to 840 (IGGIFIVLAAGLVLSVFVAVG) traverse the membrane as a helical segment. Residues 841–908 (EFLYKSKKNA…RRLPGKETMA (68 aa)) lie on the Cytoplasmic side of the membrane. Residues S846 and S868 each carry the phosphoserine; by PKC modification. K886 is covalently cross-linked (Glycyl lysine isopeptide (Lys-Gly) (interchain with G-Cter in SUMO1)).

This sequence belongs to the glutamate-gated ion channel (TC 1.A.10.1) family. GRIK2 subfamily. Homotetramer and heterotetramer with GRIK5. Tetramers may be formed by the dimerization of dimers. Assembles into a kainate-gated homomeric channel that does not bind AMPA. Can form functional heteromeric receptors with GRIK3. Forms a heteromeric complex with GRIK4 and GRIK5. Interacts with DLG4. Interacts (via C-terminus) with KLHL17 (via kelch repeats); the interaction targets GRIK2 for degradation via ubiquitin-proteasome pathway. Interacts with NETO2. Post-translationally, sumoylation mediates kainate receptor-mediated endocytosis and regulates synaptic transmission. Sumoylation is enhanced by PIAS3 and desumoylated by SENP1. In terms of processing, ubiquitinated. Ubiquitination regulates the GRIK2 levels at the synapse by leading kainate receptor degradation through proteasome. Phosphorylated by PKC at Ser-868 upon agonist activation, this directly enhance sumoylation. Expressed in the hippocampal mossy fiber synapses (at protein level). Most abundant in the cerebellum and the hypothalamus. Expressed in a proportion of dorsal root ganglion (DRG) neurons (13.6%); predominantly small diameter DRG neurons (75%) with the remainder expressed in medium diameter DRG neurons.

The protein resides in the cell membrane. Its subcellular location is the postsynaptic cell membrane. It catalyses the reaction Ca(2+)(in) = Ca(2+)(out). The enzyme catalyses Na(+)(in) = Na(+)(out). Its activity is regulated as follows. Cold receptor activity activated by temperatures between 10-19 degrees Celsius. Functionally, ionotropic glutamate receptor that functions as a cation-permeable ligand-gated ion channel, gated by L-glutamate and the glutamatergic agonist kainic acid. L-glutamate acts as an excitatory neurotransmitter at many synapses in the central nervous system. Binding of the excitatory neurotransmitter L-glutamate induces a conformation change, leading to the opening of the cation channel, and thereby converts the chemical signal to an electrical impulse. The receptor then desensitizes rapidly and enters a transient inactive state, characterized by the presence of bound agonist. Modulates cell surface expression of NETO2. In association with GRIK3, involved in presynaptic facilitation of glutamate release at hippocampal mossy fiber synapses. Its function is as follows. Independent of its ionotropic glutamate receptor activity, acts as a thermoreceptor conferring sensitivity to cold temperatures. Functions in dorsal root ganglion neurons. In terms of biological role, ionotropic glutamate receptor that functions as a cation-permeable ligand-gated ion channel, gated by L-glutamate and the glutamatergic agonist kainic acid. The protein is Glutamate receptor ionotropic, kainate 2 (Grik2) of Mus musculus (Mouse).